Here is a 318-residue protein sequence, read N- to C-terminus: V-set and immunoglobulin domain-containing protein 1 (318 aa).

The N-terminal stretch at 1–19 (MSFLLFITLGLSLTALSHC) is a signal peptide. An Ig-like V-type domain is found at 20–131 (VQVTIQNPII…SSGQGKILLT (112 aa)). Topologically, residues 20–233 (VQVTIQNPII…TGGEGGVIAA (214 aa)) are extracellular. Disulfide bonds link Cys41–Cys114 and Cys157–Cys207. Residues 136 to 223 (PSVPHCSIRG…GNATCELNLH (88 aa)) form the Ig-like C2-type domain. Residues 234–254 (AVIGGLLAAAIIIAIVWFLVV) traverse the membrane as a helical segment. Over 255–318 (KRKQKKQLPP…ANGETEEPTA (64 aa)) the chain is Cytoplasmic. The segment at 261–318 (QLPPTKEMKTGGNQYMAVSGEANEPPKENLGASEPTETIQFHDHAENAANGETEEPTA) is disordered.

In terms of tissue distribution, expressed in thymocytes.

The protein localises to the membrane. In Xenopus laevis (African clawed frog), this protein is V-set and immunoglobulin domain-containing protein 1 (vsig1).